The chain runs to 276 residues: Undecaprenyl-diphosphatase 1 (276 aa).

A run of 5 helical transmembrane segments spans residues 83 to 103, 108 to 128, 187 to 207, 217 to 237, and 252 to 272; these read FTLN…LFEK, VLFS…IILW, VATE…TLYE, VDSL…AFVC, and VFAW…YSGW.

Belongs to the UppP family.

Its subcellular location is the cell inner membrane. The catalysed reaction is di-trans,octa-cis-undecaprenyl diphosphate + H2O = di-trans,octa-cis-undecaprenyl phosphate + phosphate + H(+). Functionally, catalyzes the dephosphorylation of undecaprenyl diphosphate (UPP). Confers resistance to bacitracin. This Burkholderia cenocepacia (strain HI2424) protein is Undecaprenyl-diphosphatase 1.